A 301-amino-acid polypeptide reads, in one-letter code: Probable alpha-L-glutamate ligase (301 aa).

An ATP-grasp domain is found at 104–287 (MQLLSRKGIG…VAGLIIDFIE (184 aa)). Residues K141, 178–179 (EF), D187, and 211–213 (RSN) contribute to the ATP site. Mg(2+)-binding residues include D248, E260, and N262. Residues D248, E260, and N262 each contribute to the Mn(2+) site.

It belongs to the RimK family. Mg(2+) serves as cofactor. Mn(2+) is required as a cofactor.

The chain is Probable alpha-L-glutamate ligase from Aliivibrio fischeri (strain MJ11) (Vibrio fischeri).